The following is a 187-amino-acid chain: NADH-quinone oxidoreductase subunit B (187 aa).

Residues C66, C67, C131, and C161 each coordinate [4Fe-4S] cluster.

The protein belongs to the complex I 20 kDa subunit family. As to quaternary structure, NDH-1 is composed of 14 different subunits. Subunits NuoB, C, D, E, F, and G constitute the peripheral sector of the complex. The cofactor is [4Fe-4S] cluster.

The protein localises to the cell inner membrane. The enzyme catalyses a quinone + NADH + 5 H(+)(in) = a quinol + NAD(+) + 4 H(+)(out). Functionally, NDH-1 shuttles electrons from NADH, via FMN and iron-sulfur (Fe-S) centers, to quinones in the respiratory chain. Couples the redox reaction to proton translocation (for every two electrons transferred, four hydrogen ions are translocated across the cytoplasmic membrane), and thus conserves the redox energy in a proton gradient. This is NADH-quinone oxidoreductase subunit B from Rhizorhabdus wittichii (strain DSM 6014 / CCUG 31198 / JCM 15750 / NBRC 105917 / EY 4224 / RW1) (Sphingomonas wittichii).